Here is a 107-residue protein sequence, read N- to C-terminus: Defensin-like protein 242 (107 aa).

An N-terminal signal peptide occupies residues 1 to 22 (MKVVAIFLASCVLFSLIPTHLS). Intrachain disulfides connect Cys45/Cys100, Cys55/Cys84, Cys65/Cys94, and Cys82/Cys96.

It belongs to the DEFL family.

It is found in the secreted. The sequence is that of Defensin-like protein 242 (SCRL10) from Arabidopsis thaliana (Mouse-ear cress).